Here is a 343-residue protein sequence, read N- to C-terminus: Probable magnesium transporter NIPA4 (343 aa).

The Extracellular segment spans residues 1–18 (MAESSGSWRDSYKGMSSD). The chain crosses the membrane as a helical span at residues 19–39 (NIKGLVLALSSSLFIGASFIV). Residues 40–66 (KKKGLKKAASTGTRAGVGGYSYLYEPL) lie on the Cytoplasmic side of the membrane. The chain crosses the membrane as a helical span at residues 67 to 87 (WWIGMTTMLLGEIANFAAYAF). Over 88–90 (APA) the chain is Extracellular. A helical transmembrane segment spans residues 91–111 (ILVTPLGAVSIIISAVLAHII). Over 112 to 115 (LREK) the chain is Cytoplasmic. A helical transmembrane segment spans residues 116 to 136 (LHIFGILGCALCVVGSTTIVL). The Extracellular segment spans residues 137-157 (HAPQEREIDSVIEVWNLATEP). The helical transmembrane segment at 158–178 (AFMFYASLVIGAAVFLIIRFV) threads the bilayer. Residues 179-189 (PQYGQTNVMVY) are Cytoplasmic-facing. A helical transmembrane segment spans residues 190 to 210 (IGICSLVGSLSVMSVKALGIA). Residues 211 to 220 (LKLTFSGTNQ) lie on the Extracellular side of the membrane. Residues 221 to 241 (LFYPQTWIFTLVVLTCVVTQL) traverse the membrane as a helical segment. Over 242–254 (NYLNKALDTFNTA) the chain is Cytoplasmic. A helical transmembrane segment spans residues 255–275 (IVSPIYYVMFTSLTILASVIM). At 276–283 (FKDWDRQN) the chain is on the extracellular side. A helical transmembrane segment spans residues 284–304 (GTQIVTEICGFVTILSGTFLL). The Cytoplasmic segment spans residues 305-343 (HRTKDMVEGSSVILPLRISKHINEEEGIPLRRQESLRSP).

This sequence belongs to the NIPA (TC 2.A.7) family. As to quaternary structure, homodimer.

The protein localises to the cell membrane. It is found in the early endosome. Its function is as follows. Acts as a Mg(2+) transporter. Can also transport other divalent cations such as Fe(2+), Sr(2+), Ba(2+), Mn(2+) and Co(2+) but to a much less extent than Mg(2+). This is Probable magnesium transporter NIPA4 from Arabidopsis thaliana (Mouse-ear cress).